The chain runs to 57 residues: Large ribosomal subunit protein uL30 (57 aa).

It belongs to the universal ribosomal protein uL30 family. Part of the 50S ribosomal subunit.

The polypeptide is Large ribosomal subunit protein uL30 (Clostridium perfringens (strain ATCC 13124 / DSM 756 / JCM 1290 / NCIMB 6125 / NCTC 8237 / Type A)).